A 124-amino-acid polypeptide reads, in one-letter code: Small ribosomal subunit protein uS12 (124 aa).

The residue at position 89 (D89) is a 3-methylthioaspartic acid.

The protein belongs to the universal ribosomal protein uS12 family. As to quaternary structure, part of the 30S ribosomal subunit. Contacts proteins S8 and S17. May interact with IF1 in the 30S initiation complex.

Functionally, with S4 and S5 plays an important role in translational accuracy. Interacts with and stabilizes bases of the 16S rRNA that are involved in tRNA selection in the A site and with the mRNA backbone. Located at the interface of the 30S and 50S subunits, it traverses the body of the 30S subunit contacting proteins on the other side and probably holding the rRNA structure together. The combined cluster of proteins S8, S12 and S17 appears to hold together the shoulder and platform of the 30S subunit. In Shewanella sp. (strain ANA-3), this protein is Small ribosomal subunit protein uS12.